A 286-amino-acid polypeptide reads, in one-letter code: Homoserine kinase (286 aa).

78-88 contacts ATP; sequence PVAHGLGSSSS.

The protein belongs to the GHMP kinase family. Homoserine kinase subfamily.

Its subcellular location is the cytoplasm. It carries out the reaction L-homoserine + ATP = O-phospho-L-homoserine + ADP + H(+). It participates in amino-acid biosynthesis; L-threonine biosynthesis; L-threonine from L-aspartate: step 4/5. In terms of biological role, catalyzes the ATP-dependent phosphorylation of L-homoserine to L-homoserine phosphate. The sequence is that of Homoserine kinase from Limosilactobacillus fermentum (strain NBRC 3956 / LMG 18251) (Lactobacillus fermentum).